Reading from the N-terminus, the 412-residue chain is G-protein coupled receptor homolog UL33 (412 aa).

The Virion surface portion of the chain corresponds to 1–35 (MDTIIHNTTNRSTDTPHVNITCNITEPLSAIRTTE). Asn7, Asn19, and Asn23 each carry an N-linked (GlcNAc...) asparagine; by host glycan. The chain crosses the membrane as a helical span at residues 36-56 (AVINTFIIFVGGPLNAIVLIT). Topologically, residues 57-80 (QLLTNRVLGYSTPTIYMTNLYSTN) are intravirion. Residues 81–101 (FLTLTVLPFIVLSNQWLLPAS) form a helical membrane-spanning segment. Residues 102–106 (VASCK) lie on the Virion surface side of the membrane. A disulfide bond links Cys105 and Cys188. The chain crosses the membrane as a helical span at residues 107–127 (FLSVIYYSSCTVGFATVALIA). Topologically, residues 128–147 (ADRYRVLHKRTYARQSYRST) are intravirion. A helical membrane pass occupies residues 148-168 (YIILLLTWFAGLIFSMPAAVY). Residues 169 to 206 (TTVVIHNGTNGQSSNGHATCVLYFIADEVYTVLLSWKV) are Virion surface-facing. The helical transmembrane segment at 207 to 227 (LLTLVWGAAPVIMMTWFYAFF) threads the bilayer. Residues 228–244 (YSTVQRASQKQRSRTLT) lie on the Intravirion side of the membrane. A helical transmembrane segment spans residues 245–265 (FVSVLLISFVALQTPYVSIMI). Over 266 to 292 (FNSYATAAWPMDCEHLTLRRTIGTLSR) the chain is Virion surface. A helical transmembrane segment spans residues 293 to 313 (LVPHLHCLINPILYALLGHDF). At 314–412 (LQRMRQCFRG…SQSHHNLSGV (99 aa)) the chain is on the intravirion side. The segment at 377 to 412 (NFPSGTWKGGQKTASNDTSTKIPHRLSQSHHNLSGV) is disordered. Residues 388–397 (KTASNDTSTK) are compositionally biased toward polar residues.

This sequence belongs to the G-protein coupled receptor 1 family. In terms of assembly, heterodimerizes with US28.

Its subcellular location is the virion. It is found in the host cell membrane. The protein resides in the host cytoplasm. In terms of biological role, G-protein-coupled receptor (vGPCR) that constitutively activates multiple oncogenic signaling pathways including STAT3, AP-1, phospholipase C, NF-kappa-B or cAMP-responsive element (CRE) pathways. Plays an important role in viral reactivation from latency through activation of host CREB1, facilitating its recruitment to the viral major immediate early (MIE) genes. In turn, expression of the MIE-driven genes such as UL123 are de-repressed. Also facilitates virus dissemination via the extracellular and cell-to-cell route. This is G-protein coupled receptor homolog UL33 (UL33) from Human cytomegalovirus (strain Merlin) (HHV-5).